Reading from the N-terminus, the 531-residue chain is ATP synthase subunit beta (531 aa).

Residues M1–K48 form a disordered region. Residues S19–V29 show a composition bias toward basic residues. Residues S30–H44 show a composition bias toward polar residues. Residue G203 to T210 coordinates ATP.

Belongs to the ATPase alpha/beta chains family. In terms of assembly, F-type ATPases have 2 components, CF(1) - the catalytic core - and CF(0) - the membrane proton channel. CF(1) has five subunits: alpha(3), beta(3), gamma(1), delta(1), epsilon(1). CF(0) has three main subunits: a(1), b(2) and c(9-12). The alpha and beta chains form an alternating ring which encloses part of the gamma chain. CF(1) is attached to CF(0) by a central stalk formed by the gamma and epsilon chains, while a peripheral stalk is formed by the delta and b chains.

It is found in the cell inner membrane. The catalysed reaction is ATP + H2O + 4 H(+)(in) = ADP + phosphate + 5 H(+)(out). Produces ATP from ADP in the presence of a proton gradient across the membrane. The catalytic sites are hosted primarily by the beta subunits. The sequence is that of ATP synthase subunit beta from Bartonella henselae (strain ATCC 49882 / DSM 28221 / CCUG 30454 / Houston 1) (Rochalimaea henselae).